The primary structure comprises 82 residues: MAKSCSALNFNEMSEGVCKYVLGVQQYLTELETSTQGTVDLGTMFNLQYRTQILCQYMEASSNILTAVHTEMITMARSAKGS.

The protein belongs to the chlamydial CPn_0710/CT_666/TC_0037 family.

This is an uncharacterized protein from Chlamydia muridarum (strain MoPn / Nigg).